Consider the following 27-residue polypeptide: L-amino-acid oxidase (27 aa).

Homodimer; non-covalently linked. FAD serves as cofactor. In terms of processing, contains 2 disulfide bonds. Post-translationally, N-glycosylated. In terms of tissue distribution, expressed by the venom gland.

Its subcellular location is the secreted. The enzyme catalyses an L-alpha-amino acid + O2 + H2O = a 2-oxocarboxylate + H2O2 + NH4(+). It catalyses the reaction L-leucine + O2 + H2O = 4-methyl-2-oxopentanoate + H2O2 + NH4(+). In terms of biological role, catalyzes an oxidative deamination of predominantly hydrophobic and aromatic L-amino acids, thus producing hydrogen peroxide that may contribute to the diverse toxic effects of this enzyme. Shows activity on L-Leu. Exhibits diverse biological activities, such as hemolysis, edema, apoptosis, as well as induction of platelet aggregation. Effects of snake L-amino oxidases on platelets are controversial, since they either induce aggregation or inhibit agonist-induced aggregation. These different effects are probably due to different experimental conditions. Unlike other snake venom L-amino acid oxidases, does not induce hemorrhage. This protein may also have antibacterial and antiparasitic activities. The sequence is that of L-amino-acid oxidase from Eristicophis macmahoni (Leaf-nosed viper).